Consider the following 468-residue polypeptide: 6-phospho-beta-galactosidase (468 aa).

Residues glutamine 19, histidine 116, asparagine 159, glutamate 160, and asparagine 297 each contribute to the D-galactose 6-phosphate site. The active-site Proton donor is the glutamate 160. Glutamate 375 functions as the Nucleophile in the catalytic mechanism. Residues serine 428, tryptophan 429, lysine 435, and tyrosine 437 each coordinate D-galactose 6-phosphate.

The protein belongs to the glycosyl hydrolase 1 family.

It carries out the reaction a 6-phospho-beta-D-galactoside + H2O = D-galactose 6-phosphate + an alcohol. It functions in the pathway carbohydrate metabolism; lactose degradation; D-galactose 6-phosphate and beta-D-glucose from lactose 6-phosphate: step 1/1. This is 6-phospho-beta-galactosidase from Streptococcus uberis (strain ATCC BAA-854 / 0140J).